The following is an 814-amino-acid chain: E3 ubiquitin-protein ligase TRIM71 (814 aa).

The RING-type zinc-finger motif lies at 12–76 (CPLCKEMCVS…SLQLRCPVCD (65 aa)). The tract at residues 111–146 (QQQSNGGRTASNRQRSASCSSSGLLRRAPPSQSEPR) is disordered. Residues 120-138 (ASNRQRSASCSSSGLLRRA) are compositionally biased toward low complexity. Residues 142 to 189 (QSEPRCSSCDDGNGASSHCLDCQENLCDNCLRAHQRVRLTKDHFIERF) form a B box-type 1; atypical zinc finger. C147, C150, C171, H175, C224, H227, C247, and H252 together coordinate Zn(2+). A B box-type 2 zinc finger spans residues 219-260 (PERLYCQQHDEEVLHFYCDSCSVPICRECTMGRHAGHSFVYL). The stretch at 282–370 (RQAIQLSLEQ…INAVQQVLEE (89 aa)) forms a coiled coil. A Filamin repeat occupies 425–526 (SSGAFAALTK…IENSPFKVNV (102 aa)). NHL repeat units lie at residues 539 to 582 (TLSF…FKPC), 586 to 629 (HHKF…FTFE), 633 to 676 (LLKF…FGPD), 680 to 723 (LNKY…IKPD), 727 to 770 (AHFL…FEPN), and 774 to 814 (LCKF…ILAF).

This sequence belongs to the TRIM/RBCC family.

Its subcellular location is the cytoplasm. It is found in the P-body. It carries out the reaction S-ubiquitinyl-[E2 ubiquitin-conjugating enzyme]-L-cysteine + [acceptor protein]-L-lysine = [E2 ubiquitin-conjugating enzyme]-L-cysteine + N(6)-ubiquitinyl-[acceptor protein]-L-lysine.. The protein operates within protein modification; protein ubiquitination. Functionally, E3 ubiquitin-protein ligase that cooperates with the microRNAs (miRNAs) machinery and promotes embryonic stem cells proliferation and maintenance. Binds to miRNAs and participates in post-transcriptional repression of transcripts. Required to maintain proliferation and prevent premature differentiation of neural progenitor cells during early neural development. This chain is E3 ubiquitin-protein ligase TRIM71 (trim71), found in Xenopus tropicalis (Western clawed frog).